We begin with the raw amino-acid sequence, 2345 residues long: Acetyl-CoA carboxylase 1 (2345 aa).

Position 1 is an N-acetylmethionine (methionine 1). Phosphoserine occurs at positions 5, 23, 25, 29, 34, 47, 49, and 52. Position 57 is a phosphothreonine (threonine 57). A phosphoserine mark is found at serine 77 and serine 79. Residue serine 79 is modified to Phosphoserine; by AMPK. In terms of domain architecture, Biotin carboxylation spans 116-617 (VIEKVLIANN…DTGWLDRLIA (502 aa)). Positions 274–465 (SKRILNVPQD…LPAAQLQIAM (192 aa)) constitute an ATP-grasp domain. ATP is bound at residue 300–357 (AEEVGYPVMIKASEGGGGKGIRKVNNADDFPNLFRQVQAEVPGSPIFVMRLAKQSRHL). Positions 423, 436, and 438 each coordinate Mg(2+). Positions 423, 436, and 438 each coordinate Mn(2+). Residue arginine 440 is part of the active site. Phosphothreonine is present on threonine 609. The Biotinyl-binding domain maps to 744-818 (FEKENDPSVM…DPGCVIAKMQ (75 aa)). Residue lysine 785 is modified to N6-biotinyllysine. Phosphoserine is present on residues serine 834, serine 1200, serine 1215, and serine 1217. The residue at position 1226 (threonine 1226) is a Phosphothreonine. Residues serine 1258, serine 1262, and serine 1272 each carry the phosphoserine modification. Lysine 1333 is subject to N6-acetyllysine. Residues 1575–1913 (PYVTKDLLQS…SVHSSVPLLN (339 aa)) form the CoA carboxyltransferase N-terminal domain. The interval 1575 to 2233 (PYVTKDLLQS…EDLVKKKIHN (659 aa)) is carboxyltransferase. CoA is bound by residues arginine 1822, lysine 2126, and arginine 2128. Positions 1917–2233 (PIDRIIEFVP…EDLVKKKIHN (317 aa)) constitute a CoA carboxyltransferase C-terminal domain. Residue threonine 2152 is modified to Phosphothreonine.

In terms of assembly, monomer, homodimer, and homotetramer. Can form filamentous polymers. Interacts in its inactive phosphorylated form with the BRCT domains of BRCA1 which prevents ACACA dephosphorylation and inhibits lipid synthesis. Interacts with MID1IP1; interaction with MID1IP1 promotes oligomerization and increases its activity. Mg(2+) serves as cofactor. Mn(2+) is required as a cofactor. The cofactor is biotin. Phosphorylation on Ser-1262 is required for interaction with BRCA1. Post-translationally, phosphorylation at Ser-79 by AMPK inactivates enzyme activity. In terms of processing, the biotin cofactor is covalently attached to the central biotinyl-binding domain and is required for the catalytic activity.

Its subcellular location is the cytoplasm. It localises to the cytosol. It carries out the reaction hydrogencarbonate + acetyl-CoA + ATP = malonyl-CoA + ADP + phosphate + H(+). It functions in the pathway lipid metabolism; malonyl-CoA biosynthesis; malonyl-CoA from acetyl-CoA: step 1/1. Its activity is regulated as follows. Inhibited by phosphorylation. Citrate promotes oligomerization of the protein into filaments that correspond to the most active form of the carboxylase. In terms of biological role, cytosolic enzyme that catalyzes the carboxylation of acetyl-CoA to malonyl-CoA, the first and rate-limiting step of de novo fatty acid biosynthesis. This is a 2 steps reaction starting with the ATP-dependent carboxylation of the biotin carried by the biotin carboxyl carrier (BCC) domain followed by the transfer of the carboxyl group from carboxylated biotin to acetyl-CoA. This Mus musculus (Mouse) protein is Acetyl-CoA carboxylase 1.